A 213-amino-acid chain; its full sequence is Translation initiation factor IF-3 (213 aa).

The disordered stretch occupies residues E193–E213.

The protein belongs to the IF-3 family. Monomer.

Its subcellular location is the cytoplasm. Functionally, IF-3 binds to the 30S ribosomal subunit and shifts the equilibrium between 70S ribosomes and their 50S and 30S subunits in favor of the free subunits, thus enhancing the availability of 30S subunits on which protein synthesis initiation begins. The sequence is that of Translation initiation factor IF-3 from Chlorobaculum tepidum (strain ATCC 49652 / DSM 12025 / NBRC 103806 / TLS) (Chlorobium tepidum).